Reading from the N-terminus, the 161-residue chain is Transcription elongation factor GreA (161 aa).

A coiled-coil region spans residues 46 to 71; sequence AEYTAAKEKQSFLHGKLQELENNLAL.

The protein belongs to the GreA/GreB family.

Necessary for efficient RNA polymerase transcription elongation past template-encoded arresting sites. The arresting sites in DNA have the property of trapping a certain fraction of elongating RNA polymerases that pass through, resulting in locked ternary complexes. Cleavage of the nascent transcript by cleavage factors such as GreA or GreB allows the resumption of elongation from the new 3'terminus. GreA releases sequences of 2 to 3 nucleotides. The chain is Transcription elongation factor GreA from Syntrophus aciditrophicus (strain SB).